Reading from the N-terminus, the 424-residue chain is Serine hydroxymethyltransferase (424 aa).

(6S)-5,6,7,8-tetrahydrofolate-binding positions include Leu-126 and Gly-130–Leu-132. Lys-235 bears the N6-(pyridoxal phosphate)lysine mark. Ser-359 to Phe-361 serves as a coordination point for (6S)-5,6,7,8-tetrahydrofolate.

It belongs to the SHMT family. In terms of assembly, homodimer. The cofactor is pyridoxal 5'-phosphate.

Its subcellular location is the cytoplasm. The enzyme catalyses (6R)-5,10-methylene-5,6,7,8-tetrahydrofolate + glycine + H2O = (6S)-5,6,7,8-tetrahydrofolate + L-serine. The protein operates within one-carbon metabolism; tetrahydrofolate interconversion. It participates in amino-acid biosynthesis; glycine biosynthesis; glycine from L-serine: step 1/1. In terms of biological role, catalyzes the reversible interconversion of serine and glycine with tetrahydrofolate (THF) serving as the one-carbon carrier. This reaction serves as the major source of one-carbon groups required for the biosynthesis of purines, thymidylate, methionine, and other important biomolecules. Also exhibits THF-independent aldolase activity toward beta-hydroxyamino acids, producing glycine and aldehydes, via a retro-aldol mechanism. The polypeptide is Serine hydroxymethyltransferase (Prochlorococcus marinus (strain MIT 9303)).